A 181-amino-acid polypeptide reads, in one-letter code: Adenylate kinase (181 aa).

10–15 contributes to the ATP binding site; that stretch reads GAGKGT. The interval 30-59 is NMP; sequence STGDLFRDNITNETELGVEAKRYLDAGDLV. Residues Thr-31, Arg-36, 57–59, 85–88, and Gln-92 contribute to the AMP site; these read DLV and GYPR. Residues 126–132 form an LID region; sequence GRGRADD. Arg-127 provides a ligand contact to ATP. Residues Arg-129 and Arg-140 each coordinate AMP. Gly-166 is an ATP binding site.

This sequence belongs to the adenylate kinase family. As to quaternary structure, monomer.

The protein resides in the cytoplasm. The catalysed reaction is AMP + ATP = 2 ADP. It functions in the pathway purine metabolism; AMP biosynthesis via salvage pathway; AMP from ADP: step 1/1. Its function is as follows. Catalyzes the reversible transfer of the terminal phosphate group between ATP and AMP. Plays an important role in cellular energy homeostasis and in adenine nucleotide metabolism. The polypeptide is Adenylate kinase (Mycobacterium sp. (strain MCS)).